Consider the following 200-residue polypeptide: Pyrrolidone-carboxylate peptidase (200 aa).

Residues glutamate 78, cysteine 141, and histidine 165 contribute to the active site.

It belongs to the peptidase C15 family. In terms of assembly, homotetramer.

The protein resides in the cytoplasm. The enzyme catalyses Release of an N-terminal pyroglutamyl group from a polypeptide, the second amino acid generally not being Pro.. In terms of biological role, removes 5-oxoproline from various penultimate amino acid residues except L-proline. This Lactobacillus helveticus (strain DPC 4571) protein is Pyrrolidone-carboxylate peptidase.